We begin with the raw amino-acid sequence, 745 residues long: Junction plakoglobin (745 aa).

N-acetylmethionine is present on methionine 1. Threonine 14 carries an O-linked (GlcNAc) threonine glycan. Residues serine 99 and serine 125 each carry the phosphoserine modification. ARM repeat units lie at residues asparagine 132–lysine 171, lysine 172–histidine 215, arginine 216–leucine 255, glutamate 258–tyrosine 297, glycine 298–cysteine 341, proline 342–aspartate 381, alanine 383–cysteine 420, serine 423–serine 464, glutamate 470–leucine 510, proline 512–threonine 551, proline 574–glutamine 613, and lysine 615–arginine 661. The interaction with DSC1 and DSG1 stretch occupies residues asparagine 132–tyrosine 297. Serine 182 carries the post-translational modification Phosphoserine. An interaction with DSC1 region spans residues proline 574–arginine 661. Serine 665 and serine 730 each carry phosphoserine.

Belongs to the beta-catenin family. In terms of assembly, homodimer. Component of an E-cadherin/catenin adhesion complex composed of at least E-cadherin/CDH1 and gamma-catenin/JUP, and possibly alpha-catenin/CTNNA1; the complex is located to adherens junctions. The stable association of CTNNA1 is controversial as CTNNA1 was shown not to bind to F-actin when assembled in the complex. Interacts with MUC1. Interacts with CAV1. Interacts with PTPRJ. Interacts with DSG1. Interacts with DSC1 and DSC2. Interacts with PKP2. Interacts with PKP3 (via N-terminus); the interaction is required for PKP3 localization to desmosome cell-cell junctions. Interacts with DSG4. In terms of processing, may be phosphorylated by FER.

It is found in the cell junction. Its subcellular location is the adherens junction. The protein localises to the desmosome. The protein resides in the cytoplasm. It localises to the cytoskeleton. It is found in the cell membrane. Its subcellular location is the nucleus. Common junctional plaque protein. The membrane-associated plaques are architectural elements in an important strategic position to influence the arrangement and function of both the cytoskeleton and the cells within the tissue. The presence of plakoglobin in both the desmosomes and in the intermediate junctions suggests that it plays a central role in the structure and function of submembranous plaques. Acts as a substrate for VE-PTP and is required by it to stimulate VE-cadherin function in endothelial cells. Can replace beta-catenin in E-cadherin/catenin adhesion complexes which are proposed to couple cadherins to the actin cytoskeleton. The chain is Junction plakoglobin from Sus scrofa (Pig).